A 681-amino-acid chain; its full sequence is Minichromosome maintenance domain-containing protein 2 (681 aa).

S292 is subject to Phosphoserine. Residues 533 to 621 form the MCM domain; that stretch reads KQFTTEDFEK…LIAALLLEIS (89 aa).

Predominantly expressed in the gonads and the brain. Not detected in the heart, lung, nor embryonic fibroblasts.

Plays an important role in meiotic recombination and associated DNA double-strand break repair. The protein is Minichromosome maintenance domain-containing protein 2 (Mcmdc2) of Mus musculus (Mouse).